Reading from the N-terminus, the 957-residue chain is Dystrophin-related protein 2 (957 aa).

Spectrin repeat units lie at residues 102–179 (DHSG…EELE) and 231–337 (EHLL…QLQD). In terms of domain architecture, WW spans 358 to 383 (WERAISPNKVPYYINHQAQTTCWDHP). The ZZ-type; degenerate zinc finger occupies 605-661 (KHQTKCSICRQCPIKGFRYRSLKQFNVDICQTCFLTGKASKGNKLHYPIMEYYTPTT). Residues Cys610, Cys613, Cys634, and Cys637 each contribute to the Zn(2+) site. Ser748 is subject to Phosphoserine. The segment covering 877–894 (PPTESDGNGSAGSSLASS) has biased composition (low complexity). The disordered stretch occupies residues 877–923 (PPTESDGNGSAGSSLASSPRQSEGSHPREKGQTTPDTEAADDVGSKS). The residue at position 910 (Thr910) is a Phosphothreonine.

In terms of assembly, interacts with PRX; this enhances phosphorylation. Identified in a dystroglycan complex that contains at least PRX, DRP2, UTRN, DMD and DAG1. Detected in trigeminal nerve Schwann cells. Detected in brain cortex and hippocampus. Detected in brain membrane fractions and highly enriched in the postsynaptic density (at protein level).

It is found in the postsynaptic density. The protein resides in the cell projection. Its subcellular location is the dendrite. The protein localises to the perikaryon. It localises to the cell membrane. Functionally, required for normal myelination and for normal organization of the cytoplasm and the formation of Cajal bands in myelinating Schwann cells. Required for normal PRX location at appositions between the abaxonal surface of the myelin sheath and the Schwann cell plasma membrane. Possibly involved in membrane-cytoskeleton interactions of the central nervous system. The polypeptide is Dystrophin-related protein 2 (Drp2) (Rattus norvegicus (Rat)).